Consider the following 154-residue polypeptide: Interleukin-2 (154 aa).

Residues 1 to 20 (MYRMQLLSCIALSLALVTNS) form the signal peptide. Residue Thr-23 is glycosylated (O-linked (GalNAc...) threonine). An intrachain disulfide couples Cys-78 to Cys-126.

This sequence belongs to the IL-2 family.

The protein resides in the secreted. Functionally, cytokine produced by activated CD4-positive helper T-cells and to a lesser extend activated CD8-positive T-cells and natural killer (NK) cells that plays pivotal roles in the immune response and tolerance. Binds to a receptor complex composed of either the high-affinity trimeric IL-2R (IL2RA/CD25, IL2RB/CD122 and IL2RG/CD132) or the low-affinity dimeric IL-2R (IL2RB and IL2RG). Interaction with the receptor leads to oligomerization and conformation changes in the IL-2R subunits resulting in downstream signaling starting with phosphorylation of JAK1 and JAK3. In turn, JAK1 and JAK3 phosphorylate the receptor to form a docking site leading to the phosphorylation of several substrates including STAT5. This process leads to activation of several pathways including STAT, phosphoinositide-3-kinase/PI3K and mitogen-activated protein kinase/MAPK pathways. Functions as a T-cell growth factor and can increase NK-cell cytolytic activity as well. Promotes strong proliferation of activated B-cells and subsequently immunoglobulin production. Plays a pivotal role in regulating the adaptive immune system by controlling the survival and proliferation of regulatory T-cells, which are required for the maintenance of immune tolerance. Moreover, participates in the differentiation and homeostasis of effector T-cell subsets, including Th1, Th2, Th17 as well as memory CD8-positive T-cells. The protein is Interleukin-2 (IL2) of Papio anubis (Olive baboon).